The sequence spans 531 residues: T-complex protein 1 subunit zeta-2 (531 aa).

This sequence belongs to the TCP-1 chaperonin family. Component of the chaperonin-containing T-complex (TRiC), a heterooligomeric complex of about 850 to 900 kDa that forms two stacked rings, 12 to 16 nm in diameter.

The protein localises to the cytoplasm. Component of the chaperonin-containing T-complex (TRiC), a molecular chaperone complex that assists the folding of proteins upon ATP hydrolysis. In Bos taurus (Bovine), this protein is T-complex protein 1 subunit zeta-2 (CCT6B).